Here is a 718-residue protein sequence, read N- to C-terminus: Heat shock 70 kDa protein 7, chloroplastic (718 aa).

A chloroplast-targeting transit peptide spans 1–92 (MASSAAQIHI…IDLGTTNSAV (92 aa)). Over residues 668-678 (QIGQSLYNQPQ) the composition is skewed to polar residues. The tract at residues 668–718 (QIGQSLYNQPQPGGADSPPGGEASSSSDTSSSAKGGDNGGDVIDADFTDSN) is disordered.

This sequence belongs to the heat shock protein 70 (TC 1.A.33) family. DnaK subfamily.

The protein resides in the plastid. It localises to the chloroplast stroma. Functionally, acts redundantly with HSP70-6 in the thermotolerance of germinating seeds. Plays an important role in the protein precursor import into chloroplasts. In cooperation with other chaperones, Hsp70s are key components that facilitate folding of de novo synthesized proteins, assist translocation of precursor proteins into organelles, and are responsible for degradation of damaged protein under stress conditions. In Arabidopsis thaliana (Mouse-ear cress), this protein is Heat shock 70 kDa protein 7, chloroplastic (HSP70-7).